The primary structure comprises 425 residues: 2,3-diketo-L-gulonate TRAP transporter large permease protein YiaN (425 aa).

The next 11 helical transmembrane spans lie at 3 to 23, 54 to 74, 93 to 113, 139 to 159, 170 to 190, 209 to 229, 235 to 255, 277 to 297, 314 to 334, 355 to 375, and 399 to 419; these read VLIF…IAWA, FSLL…AGGL, LGYV…SAVA, LIAS…FIIF, LFMA…LTWW, IWHS…IIGG, FTPT…ATVI, VVMF…IAEL, LLFI…DLTP, IYFG…PPIG, and YVLV…LIIL.

The protein belongs to the TRAP transporter large permease family. As to quaternary structure, the complex comprises the extracytoplasmic solute receptor protein YiaO, and the two transmembrane proteins YiaM and YiaN.

It is found in the cell inner membrane. In terms of biological role, part of the tripartite ATP-independent periplasmic (TRAP) transport system YiaMNO involved in the uptake of 2,3-diketo-L-gulonate. This chain is 2,3-diketo-L-gulonate TRAP transporter large permease protein YiaN (yiaN), found in Escherichia coli (strain K12).